A 453-amino-acid chain; its full sequence is Carbamoyl phosphate synthase arginine-specific small chain (453 aa).

The transit peptide at 1–28 (MFARVFKAMPARASALTSVNASIQARFM) directs the protein to the mitochondrion. Positions 219 to 406 (HVAVIDCGVK…IDSVKKYKAS (188 aa)) constitute a Glutamine amidotransferase type-1 domain. The active-site Nucleophile is the Cys-295. Residues His-379 and Glu-381 contribute to the active site.

The protein belongs to the CarA family. Heterodimer composed of 2 chains; the small (or glutamine) chain promotes the hydrolysis of glutamine to ammonia, which is used by the large (or ammonia) chain to synthesize carbamoyl phosphate.

The protein resides in the mitochondrion matrix. It carries out the reaction hydrogencarbonate + L-glutamine + 2 ATP + H2O = carbamoyl phosphate + L-glutamate + 2 ADP + phosphate + 2 H(+). The enzyme catalyses L-glutamine + H2O = L-glutamate + NH4(+). It participates in amino-acid biosynthesis; L-arginine biosynthesis; carbamoyl phosphate from bicarbonate: step 1/1. Functionally, small subunit of the arginine-specific carbamoyl phosphate synthase (CPSase). CPSase catalyzes the formation of carbamoyl phosphate from the ammonia moiety of glutamine, carbonate, and phosphate donated by ATP, the first step of the arginine biosynthetic pathway. The small subunit (glutamine amidotransferase) binds and cleaves glutamine to supply the large subunit with the substrate ammonia. This chain is Carbamoyl phosphate synthase arginine-specific small chain (cpa1), found in Neosartorya fischeri (strain ATCC 1020 / DSM 3700 / CBS 544.65 / FGSC A1164 / JCM 1740 / NRRL 181 / WB 181) (Aspergillus fischerianus).